The following is a 1562-amino-acid chain: NAC-alpha domain-containing protein 1 (1562 aa).

A compositionally biased stretch (low complexity) spans 1–13 (MPGEAARAELLLP). 8 disordered regions span residues 1–24 (MPGE…RTDL), 56–110 (FLPS…TEAP), 131–226 (SPRA…ADGD), 249–288 (SGWG…SSSW), 327–365 (TPLS…LQSL), 381–458 (RDDT…GAYL), 503–941 (TPQA…EPLA), and 953–1423 (GCAP…AMSK). A compositionally biased stretch (basic and acidic residues) spans 195–208 (GDARDSEAELRDEL). Residues 275–287 (SSESSLSADSSSS) show a composition bias toward low complexity. Residues 331-340 (PEEEEEEAVA) show a composition bias toward acidic residues. A compositionally biased stretch (low complexity) spans 385–397 (SAASSDSDSASYA). Composition is skewed to polar residues over residues 449-458 (PQTSDRGAYL) and 550-564 (QEET…SPQN). Positions 992 to 1007 (PAALDQVQQDDPQPAA) are enriched in low complexity. The span at 1048–1074 (PGREACLEARAHTGDGAKPDSPQKETL) shows a compositional bias: basic and acidic residues. The residue at position 1068 (Ser-1068) is a Phosphoserine. Low complexity-rich tracts occupy residues 1172 to 1182 (APTSAPTSQQP) and 1231 to 1241 (APGTLAGAALP). A compositionally biased stretch (acidic residues) spans 1254-1264 (PQEDSVEDEEP). 3 stretches are compositionally biased toward low complexity: residues 1265-1284 (PGSL…AAAV), 1298-1308 (SLSPHSPLLSP), and 1335-1344 (QSPAGPQGLS). Residues 1348–1357 (QQEDEDSLEE) show a composition bias toward acidic residues. Ser-1354 carries the post-translational modification Phosphoserine. The NAC-A/B domain occupies 1411 to 1476 (SRSEKKARKA…AKIEDLSQQV (66 aa)).

The protein belongs to the NAC-alpha family.

It localises to the cytoplasm. Its subcellular location is the nucleus. In terms of biological role, may prevent inappropriate targeting of non-secretory polypeptides to the endoplasmic reticulum (ER). May bind to nascent polypeptide chains as they emerge from the ribosome and block their interaction with the signal recognition particle (SRP), which normally targets nascent secretory peptides to the ER. May also reduce the inherent affinity of ribosomes for protein translocation sites in the ER membrane (M sites). In Homo sapiens (Human), this protein is NAC-alpha domain-containing protein 1 (NACAD).